The sequence spans 104 residues: Enhancer of rudimentary homolog 1 (104 aa).

It belongs to the E(R) family. As to quaternary structure, homodimer. Component of the erh1-mmi1 complex. Interacts with mmi1 (via N-terminus) in a 2:2 stoichiometry.

The protein localises to the nucleus. It is found in the cytoplasm. In terms of biological role, forms part of the erh1-mmi1 complex that recruits the CCR4-NOT complex and the NURS complex to target RNAs. Suppresses the meiotic program during vegetative growth and promotes the meiotic program during mating. Recruitment of the NURS complex to target mRNAs promotes mRNA decay by engagement of the nuclear exosome, and formation of heterochromatin islands at meiotic genes silenced by the exosome. Recruitment of the CCR4-NOT complex to target RNAs promotes heterochromatin formation at RNAi-dependent heterochromatin domains (HOODs), including a subset of meiotic genes, lncRNAs and retrotransposons. Recruitment of the CCR4-NOT complex to rDNA promotes rDNA heterochromatin assembly. In Schizosaccharomyces pombe (strain 972 / ATCC 24843) (Fission yeast), this protein is Enhancer of rudimentary homolog 1.